The chain runs to 1038 residues: Translation initiation factor IF-2 (1038 aa).

Residues Gly32–Arg442 are disordered. Low complexity-rich tracts occupy residues Pro65–Pro77, Pro100–Pro113, and Pro131–Ala147. Basic and acidic residues-rich tracts occupy residues Ser204 to Ser217 and Arg275 to Lys295. Residues Pro311–Ala328 show a composition bias toward low complexity. Over residues Pro331 to Lys344 the composition is skewed to basic and acidic residues. Residues His422 to Gly435 are compositionally biased toward basic residues. The tr-type G domain maps to Ala529 to Glu696. The interval Gly538–Thr545 is G1. Gly538–Thr545 lines the GTP pocket. A G2 region spans residues Gly563 to His567. The interval Asp584–Gly587 is G3. Residues Asp584–His588 and Asn638–Asp641 contribute to the GTP site. Residues Asn638–Asp641 form a G4 region. The segment at Ser674 to Thr676 is G5.

It belongs to the TRAFAC class translation factor GTPase superfamily. Classic translation factor GTPase family. IF-2 subfamily.

The protein resides in the cytoplasm. Functionally, one of the essential components for the initiation of protein synthesis. Protects formylmethionyl-tRNA from spontaneous hydrolysis and promotes its binding to the 30S ribosomal subunits. Also involved in the hydrolysis of GTP during the formation of the 70S ribosomal complex. This chain is Translation initiation factor IF-2, found in Rhodopirellula baltica (strain DSM 10527 / NCIMB 13988 / SH1).